A 436-amino-acid polypeptide reads, in one-letter code: MTQQTFTQYDFKPFLIDAVRELRFTEPTGIQQKIFPVVKKGVSVIGQSQTGSGKTHAYLLPTLNRINASREEVQLVITAPTRELAQQIYEEIVKLTKFCAEDQMITARCLIGGTDKQRSIEKLKKQPHIVVGTPGRIKDLVEEQALFVHKANTIIVDEADLMLDMGFIHDVDKIAARMPKNLQMLVFSATIPQKLKPFLKKYMENPEHIHINPKQVAAGNIEHYLVPSKHRNKIDLVHKMLLQFKPYLAVVFTNTKKMADQVADGLMERGLKVGRIHGDLSPRDRKKMMKQIRDLEFQYIVATDLAARGIDIQGISHVINYQPPSDLDFFVHRVARTARAGHSGIAVTIYDPANEEALDSLEKQRHIEFKHVDLRGDEWADLGERRRRKSRKKPNDELDVMATKVIKKPKKVKPNYKRKLATERDKVKRKYSNKKR.

The short motif at 4-32 (QTFTQYDFKPFLIDAVRELRFTEPTGIQQ) is the Q motif element. One can recognise a Helicase ATP-binding domain in the interval 35 to 209 (FPVVKKGVSV…KKYMENPEHI (175 aa)). 48–55 (SQTGSGKT) contributes to the ATP binding site. The DEAD box signature appears at 157–160 (DEAD). The Helicase C-terminal domain occupies 240–388 (MLLQFKPYLA…WADLGERRRR (149 aa)). The interval 385 to 436 (RRRRKSRKKPNDELDVMATKVIKKPKKVKPNYKRKLATERDKVKRKYSNKKR) is disordered. Basic residues-rich tracts occupy residues 405 to 419 (VIKK…YKRK) and 427 to 436 (VKRKYSNKKR).

The protein belongs to the DEAD box helicase family. CshB subfamily.

It localises to the cytoplasm. It carries out the reaction ATP + H2O = ADP + phosphate + H(+). Probable DEAD-box RNA helicase. May work in conjunction with the cold shock proteins to ensure proper initiation of transcription at low and optimal temperatures. Unwinds dsRNA in both 5'- and 3'-directions and shows RNA-dependent ATPase activity. Probably has a somewhat redundant function with CshA, as cshA can partially complement the growth effects of a cshB deletion. This Bacillus cereus (strain ATCC 14579 / DSM 31 / CCUG 7414 / JCM 2152 / NBRC 15305 / NCIMB 9373 / NCTC 2599 / NRRL B-3711) protein is DEAD-box ATP-dependent RNA helicase CshB.